Here is a 354-residue protein sequence, read N- to C-terminus: Thiamine thiazole synthase (354 aa).

Substrate is bound by residues Ala83, 104-105 (EA), Gly112, and Val177. Cys210 carries the 2,3-didehydroalanine (Cys) modification. Residues Asp212, His227, Met305, and 315–317 (RMG) each bind substrate.

This sequence belongs to the THI4 family. In terms of assembly, homooctamer. The cofactor is Fe cation. During the catalytic reaction, a sulfide is transferred from Cys-210 to a reaction intermediate, generating a dehydroalanine residue.

It localises to the cytoplasm. The protein localises to the nucleus. The catalysed reaction is [ADP-thiazole synthase]-L-cysteine + glycine + NAD(+) = [ADP-thiazole synthase]-dehydroalanine + ADP-5-ethyl-4-methylthiazole-2-carboxylate + nicotinamide + 3 H2O + 2 H(+). Involved in biosynthesis of the thiamine precursor thiazole. Catalyzes the conversion of NAD and glycine to adenosine diphosphate 5-(2-hydroxyethyl)-4-methylthiazole-2-carboxylic acid (ADT), an adenylated thiazole intermediate. The reaction includes an iron-dependent sulfide transfer from a conserved cysteine residue of the protein to a thiazole intermediate. The enzyme can only undergo a single turnover, which suggests it is a suicide enzyme. May have additional roles in adaptation to various stress conditions and in DNA damage tolerance. This chain is Thiamine thiazole synthase, found in Candida albicans (strain SC5314 / ATCC MYA-2876) (Yeast).